The primary structure comprises 280 residues: Dermonecrotic toxin LgSicTox-alphaIA1 (280 aa).

His12 is an active-site residue. Mg(2+) contacts are provided by Glu32 and Asp34. Catalysis depends on His48, which acts as the Nucleophile. An intrachain disulfide couples Cys52 to Cys58. Residue Asp92 coordinates Mg(2+).

This sequence belongs to the arthropod phospholipase D family. Class I subfamily. It depends on Mg(2+) as a cofactor. Expressed by the venom gland.

It is found in the secreted. The catalysed reaction is an N-(acyl)-sphingosylphosphocholine = an N-(acyl)-sphingosyl-1,3-cyclic phosphate + choline. It carries out the reaction an N-(acyl)-sphingosylphosphoethanolamine = an N-(acyl)-sphingosyl-1,3-cyclic phosphate + ethanolamine. The enzyme catalyses a 1-acyl-sn-glycero-3-phosphocholine = a 1-acyl-sn-glycero-2,3-cyclic phosphate + choline. It catalyses the reaction a 1-acyl-sn-glycero-3-phosphoethanolamine = a 1-acyl-sn-glycero-2,3-cyclic phosphate + ethanolamine. Functionally, dermonecrotic toxins cleave the phosphodiester linkage between the phosphate and headgroup of certain phospholipids (sphingolipid and lysolipid substrates), forming an alcohol (often choline) and a cyclic phosphate. This toxin acts on sphingomyelin (SM). It may also act on ceramide phosphoethanolamine (CPE), lysophosphatidylcholine (LPC) and lysophosphatidylethanolamine (LPE), but not on lysophosphatidylserine (LPS), and lysophosphatidylglycerol (LPG). It acts by transphosphatidylation, releasing exclusively cyclic phosphate products as second products. Induces dermonecrosis, hemolysis, increased vascular permeability, edema, inflammatory response, and platelet aggregation. The chain is Dermonecrotic toxin LgSicTox-alphaIA1 from Loxosceles gaucho (Spider).